The following is a 262-amino-acid chain: MGAAAAEADRTLFVGNLETKVTEELLFELFHQAGPVIKVKIPKDKDGKPKQFAFVNFKHEVSVPYAMNLLNGIKLFGRPIKIQFRAGSSHASQEVSLSYPQHHVGNSSPTSTSPSRTVDNMTPSAQTIQRSFSSSENFQRQAVMNNVLRQMSYGGKFGSPHLDQSGFSPSAQSHNHTFNQSSSSQWRQDTPSSQRKVRLNSHPYVMDRHYSREQRYSDLSDHHYRGNRDDFFYEDRNHDGWSHDYDNRRDSGRNGKWRSSRH.

Gly2 bears the N-acetylglycine mark. Residues Arg10–Gly87 enclose the RRM domain. ZCCHC8 binding regions lie at residues Leu25–Pro35 and His59–Phe76. A disordered region spans residues Val95–Met121. 2 positions are modified to phosphoserine: Ser133 and Ser134. Arg149 carries the post-translational modification Omega-N-methylarginine. Disordered stretches follow at residues Ser159 to Arg212 and Ser242 to His262. Residues Ser165–Gln194 show a composition bias toward polar residues. Ser201 is subject to Phosphoserine. Positions Ser242 to Arg253 are enriched in basic and acidic residues.

Component of the nuclear exosome targeting (NEXT) complex composed of MTREX, ZCCHC8, and RBM7 that directs a subset of non-coding short-lived RNAs for exosomal degradation. Interacts with ZCCHC8 and SF3B2/SAP145. Binds to MTREX through ZCCHC8. Interacts with YWHAE and YWHAZ; these interactions are stress-dependent and RBM7 phosphorylation dependent; release RNA from the NEXT complex and may affect RNA targeting to the nuclear RNA exosomome for degradation. Interacts with MEPCE and LARP7, the core subunits of 7SK snRNP; upon genotoxic stress this interaction is enhanced, triggering the release of inactive P-TEFb complex from the core and P-TEFb complex activation. Post-translationally, phosphorylated at Ser-133 by MAPK14/p38-alpha-activated MAPKAPK2/MK2; this phosphorylation is stress-dependent; this phosphorylation decreases its RNA-binding capacity therefore affecting RNA nuclear exosome-mediated degradation. This phosphorylation mediates YWHAE and YWHAZ interactions.

The protein resides in the nucleus. Its subcellular location is the nucleoplasm. RNA-binding subunit of the trimeric nuclear exosome targeting (NEXT) complex, a complex that functions as an RNA exosome cofactor that directs a subset of non-coding short-lived RNAs for exosomal degradation. NEXT is involved in surveillance and turnover of aberrant transcripts and non-coding RNAs. Binds preferentially polyuridine sequences and associates with newly synthesized RNAs, including pre-mRNAs and short-lived exosome substrates such as promoter upstream transcripts (PROMPTs), enhancer RNAs (eRNAs), and 3'-extended products from small nuclear RNAs (snRNAs). Participates in several biological processes including DNA damage response (DDR) and stress response. During stress response, activation of the p38MAPK-MK2 pathway decreases RBM7-RNA-binding and subsequently the RNA exosome degradation activities, thereby modulating the turnover of non-coding transcriptome. Participates in DNA damage response (DDR), through its interaction with MEPCE and LARP7, the core subunits of 7SK snRNP complex, that release the positive transcription elongation factor b (P-TEFb) complex from the 7SK snRNP. In turn, activation of P-TEFb complex induces the transcription of P-TEFb-dependent DDR genes to promote cell viability. The sequence is that of RNA-binding protein 7 from Bos taurus (Bovine).